Here is a 219-residue protein sequence, read N- to C-terminus: MLQAGAPTAGSFRTGEVHTGTTIMAVEFDGGVVVGSDSRVSAGAAVVNRVFDKLSPLHQRIYCALSGSAADAQAIADMAAYQLELHGLELEEPPLVLAAANIVKNISYKYREDLLAHLMVAGWDQHEGGQVYGTMGGMLIRQPFAIGGSGSTYIYGYVDAAYKPGMTPEECRRFTTDAITLAMNRDGSSGGVIYLVTITADGVDHRVILGDELPKFYDE.

The propeptide at 1–20 (MLQAGAPTAGSFRTGEVHTG) is removed in mature form. The Nucleophile role is filled by threonine 21. An N6-acetyllysine mark is found at lysine 53 and lysine 109.

Belongs to the peptidase T1B family. The 26S proteasome consists of a 20S proteasome core and two 19S regulatory subunits. The 20S proteasome core is composed of 28 subunits that are arranged in four stacked rings, resulting in a barrel-shaped structure. The two end rings are each formed by seven alpha subunits, and the two central rings are each formed by seven beta subunits. The catalytic chamber with the active sites is on the inside of the barrel. Component of the immunoproteasome, where it displaces the equivalent housekeeping subunit PSMB6. Component of the spermatoproteasome, a form of the proteasome specifically found in testis. Interacts with NCOA2 and NCOA3. In terms of processing, autocleaved. The resulting N-terminal Thr residue of the mature subunit is responsible for the nucleophile proteolytic activity. As to expression, detected in the cytoplasmic lobe of elongated spermatids, in residual bodies, and in the acrosomal cap of round spermatids.

It is found in the cytoplasm. The protein resides in the nucleus. It catalyses the reaction Cleavage of peptide bonds with very broad specificity.. Its function is as follows. The proteasome is a multicatalytic proteinase complex which is characterized by its ability to cleave peptides with Arg, Phe, Tyr, Leu, and Glu adjacent to the leaving group at neutral or slightly basic pH. The proteasome has an ATP-dependent proteolytic activity. This subunit is involved in antigen processing to generate class I binding peptides. The sequence is that of Proteasome subunit beta type-9 (Psmb9) from Rattus norvegicus (Rat).